The following is a 391-amino-acid chain: 3-ketoacyl-CoA thiolase (391 aa).

Cys95 acts as the Acyl-thioester intermediate in catalysis. Residues His347 and Cys377 each act as proton acceptor in the active site.

Belongs to the thiolase-like superfamily. Thiolase family. In terms of assembly, heterotetramer of two alpha chains (FadB) and two beta chains (FadA).

It is found in the cytoplasm. It carries out the reaction an acyl-CoA + acetyl-CoA = a 3-oxoacyl-CoA + CoA. Its pathway is lipid metabolism; fatty acid beta-oxidation. Functionally, catalyzes the final step of fatty acid oxidation in which acetyl-CoA is released and the CoA ester of a fatty acid two carbons shorter is formed. The polypeptide is 3-ketoacyl-CoA thiolase (Pseudomonas entomophila (strain L48)).